A 127-amino-acid polypeptide reads, in one-letter code: Phospholipase A2 homolog otoconin-22 (127 aa).

Asparagine 20 is a glycosylation site (N-linked (GlcNAc...) asparagine). 7 disulfide bridges follow: cysteine 26–cysteine 120, cysteine 28–cysteine 44, cysteine 43–cysteine 99, cysteine 49–cysteine 127, cysteine 50–cysteine 92, cysteine 59–cysteine 85, and cysteine 78–cysteine 90. Asparagine 113 is a glycosylation site (N-linked (GlcNAc...) asparagine).

Belongs to the phospholipase A2 family. As to quaternary structure, monomer. As to expression, otoconial membrane in the maculae of the saccule and utricle. Otoconia are composites of proteins and inorganic crystals formed in the peripheral portion of the vestibular system of vertebrates. The otoconial membranes contain small crystals of calcium carbonate known as otoliths (ear stones) if there is a single deposit or as otoconia (ear dust) if there are many. Each mineral polymorph of otoconia has a protein unique to that polymorph.

The protein resides in the secreted. Major protein of the aragonitic otoconia. It is unlikely that this protein has phospholipase A2 activity. The chain is Phospholipase A2 homolog otoconin-22 from Xenopus laevis (African clawed frog).